The following is a 397-amino-acid chain: Elongation factor Tu (397 aa).

In terms of domain architecture, tr-type G spans 10–206 (KPHVNIGTIG…HIDTYIPEPT (197 aa)). The G1 stretch occupies residues 19–26 (GHVDHGKT). Position 19 to 26 (19 to 26 (GHVDHGKT)) interacts with GTP. Position 26 (threonine 26) interacts with Mg(2+). The segment at 61–65 (GITIS) is G2. The tract at residues 82-85 (DCPG) is G3. GTP is bound by residues 82–86 (DCPGH) and 137–140 (NKCD). The segment at 137-140 (NKCD) is G4. The segment at 175–177 (SAL) is G5.

It belongs to the TRAFAC class translation factor GTPase superfamily. Classic translation factor GTPase family. EF-Tu/EF-1A subfamily. As to quaternary structure, monomer.

The protein localises to the cytoplasm. The enzyme catalyses GTP + H2O = GDP + phosphate + H(+). GTP hydrolase that promotes the GTP-dependent binding of aminoacyl-tRNA to the A-site of ribosomes during protein biosynthesis. The polypeptide is Elongation factor Tu (Alkaliphilus oremlandii (strain OhILAs) (Clostridium oremlandii (strain OhILAs))).